The chain runs to 154 residues: MRIIEGNLVGTGLKIGIVVSRFNEFITGKLLSGAIDGLTRHGVSDSDITVAWVPGAFEIPLVAKKMAESKQFDAVITLGAVIRGATSHFDYVCSEAAKGVSHAALASGVPVIFGVLTTDTIEQAIERAGTKAGNKGWEAAVSAIEMANVLRTLA.

5-amino-6-(D-ribitylamino)uracil is bound by residues Phe-22, 56–58 (AFE), and 80–82 (AVI). 85–86 (AT) serves as a coordination point for (2S)-2-hydroxy-3-oxobutyl phosphate. The Proton donor role is filled by His-88. Phe-113 is a 5-amino-6-(D-ribitylamino)uracil binding site. (2S)-2-hydroxy-3-oxobutyl phosphate is bound at residue Arg-127.

It belongs to the DMRL synthase family. Forms an icosahedral capsid composed of 60 subunits, arranged as a dodecamer of pentamers.

It catalyses the reaction (2S)-2-hydroxy-3-oxobutyl phosphate + 5-amino-6-(D-ribitylamino)uracil = 6,7-dimethyl-8-(1-D-ribityl)lumazine + phosphate + 2 H2O + H(+). It participates in cofactor biosynthesis; riboflavin biosynthesis; riboflavin from 2-hydroxy-3-oxobutyl phosphate and 5-amino-6-(D-ribitylamino)uracil: step 1/2. Its function is as follows. Catalyzes the formation of 6,7-dimethyl-8-ribityllumazine by condensation of 5-amino-6-(D-ribitylamino)uracil with 3,4-dihydroxy-2-butanone 4-phosphate. This is the penultimate step in the biosynthesis of riboflavin. This is 6,7-dimethyl-8-ribityllumazine synthase from Geobacillus kaustophilus (strain HTA426).